A 403-amino-acid chain; its full sequence is Lissencephaly-1 homolog 1 (403 aa).

The 32-residue stretch at 7–38 (QRDELNQAIHQYLLISYQQSAQLFKTEAAVKD) folds into the LisH domain. Residues 51–87 (NSIVRLSKRVITLEQQVEQLNEQLAQAQAGKIQFNKS) adopt a coiled-coil conformation. WD repeat units lie at residues 103-142 (GHRA…FEKT), 145-184 (GHTS…CVKT), 187-226 (GHEH…CKKT), 229-270 (EHQE…HQLS), 271-327 (GHEH…NLFT), 330-369 (GHDN…QKKK), and 373-403 (AHDK…WLLS).

The protein belongs to the WD repeat LIS1/nudF family.

It is found in the cytoplasm. The protein localises to the cytoskeleton. Its subcellular location is the microtubule organizing center. The protein resides in the centrosome. In terms of biological role, positively regulates the activity of the minus-end directed microtubule motor protein dynein. May enhance dynein-mediated microtubule sliding by targeting dynein to the microtubule plus end. Required for several dynein- and microtubule-dependent processes. This chain is Lissencephaly-1 homolog 1, found in Paramecium tetraurelia.